We begin with the raw amino-acid sequence, 631 residues long: Integrator complex subunit 10 (631 aa).

Residues 545–570 (FELTSSPNSSGTPTATTVAGGSQSRR) show a composition bias toward polar residues. Residues 545-577 (FELTSSPNSSGTPTATTVAGGSQSRRIGTRGAD) form a disordered region.

The protein belongs to the Integrator subunit 10 family. In terms of assembly, belongs to the multiprotein complex Integrator, at least composed of IntS1, IntS2, IntS3, IntS4, omd/IntS5, IntS6, defl/IntS7, IntS8, IntS9, IntS10, IntS11, IntS12, asun/IntS13, IntS14 and IntS15. The core complex associates with protein phosphatase 2A subunits mts/PP2A and Pp2A-29B, to form the Integrator-PP2A (INTAC) complex.

It localises to the nucleus. In terms of biological role, component of the integrator complex, a multiprotein complex that terminates RNA polymerase II (Pol II) transcription in the promoter-proximal region of genes. The integrator complex provides a quality checkpoint during transcription elongation by driving premature transcription termination of transcripts that are unfavorably configured for transcriptional elongation: the complex terminates transcription by (1) catalyzing dephosphorylation of the C-terminal domain (CTD) of Pol II subunit Polr2A/Rbp1 and Spt5, and (2) degrading the exiting nascent RNA transcript via endonuclease activity. The integrator complex is also involved in the 3'-end processing of the U7 snRNA, and also the spliceosomal snRNAs U1, U2, U4 and U5. This chain is Integrator complex subunit 10, found in Drosophila melanogaster (Fruit fly).